The sequence spans 305 residues: uncharacterized protein (305 aa).

The signal sequence occupies residues 1–29 (MKKWFSSISKKKVSFSTLLLLGSGIVLSS). Cys30 is lipidated: N-palmitoyl cysteine. The S-diacylglycerol cysteine moiety is linked to residue Cys30. Residues 234-265 (FYNPDNSNGSNAPGSNQPNQDSGNNGSTTPAA) form a disordered region. The span at 237-258 (PDNSNGSNAPGSNQPNQDSGNN) shows a compositional bias: polar residues.

The protein resides in the cell membrane. This is an uncharacterized protein from Mycoplasma pneumoniae (strain ATCC 29342 / M129 / Subtype 1) (Mycoplasmoides pneumoniae).